We begin with the raw amino-acid sequence, 268 residues long: MATVPELNCEIAAFDSEENDLFFEADRPQKIKDCFQALDLGCPDESIQLQISQQHLDKSFRKAVSLIVAVEKLWQLPMSCPWSFQDEDPSTFFSFIFEEEPVLCDSWDDDDLLVCDVPIRQLHCRLRDEQQKCLVLSDPCELKALHLNGQNISQQVVFSMSFVQGETSNDKIPVALGLKGLNLYLSCVMKDGTPTLQLESVDPKQYPKKKMEKRFVFNKIEVKTKVEFESAQFPNWYISTSQAEHRPVFLGNSNGRDIVDFTMEPVSS.

Positions 1-116 (MATVPELNCE…WDDDDLLVCD (116 aa)) are excised as a propeptide.

The protein belongs to the IL-1 family. In terms of assembly, monomer. In its precursor form, weakly interacts with full-length MEFV; the mature cytokine does not interact at all. Interacts with integrins ITGAV:ITGBV and ITGA5:ITGB1; integrin-binding is required for IL1B signaling. Interacts with cargo receptor TMED10; the interaction is direct and is required for the secretion of IL1B mature form. Interacts with HSP90AB1; the interaction facilitates cargo translocation into the ERGIC. Interacts with HSP90B1; the interaction facilitates cargo translocation into the ERGIC.

The protein localises to the cytoplasm. Its subcellular location is the cytosol. It is found in the secreted. It localises to the lysosome. The protein resides in the extracellular exosome. In terms of biological role, potent pro-inflammatory cytokine. Initially discovered as the major endogenous pyrogen, induces prostaglandin synthesis, neutrophil influx and activation, T-cell activation and cytokine production, B-cell activation and antibody production, and fibroblast proliferation and collagen production. Promotes Th17 differentiation of T-cells. Synergizes with IL12/interleukin-12 to induce IFNG synthesis from T-helper 1 (Th1) cells. Plays a role in angiogenesis by inducing VEGF production synergistically with TNF and IL6. Involved in transduction of inflammation downstream of pyroptosis: its mature form is specifically released in the extracellular milieu by passing through the gasdermin-D (GSDMD) pore. The sequence is that of Interleukin-1 beta from Rattus norvegicus (Rat).